Reading from the N-terminus, the 122-residue chain is Large ribosomal subunit protein bL17 (122 aa).

Belongs to the bacterial ribosomal protein bL17 family. Part of the 50S ribosomal subunit. Contacts protein L32.

In Wigglesworthia glossinidia brevipalpis, this protein is Large ribosomal subunit protein bL17.